The following is a 477-amino-acid chain: Lactate utilization protein B (477 aa).

2 consecutive 4Fe-4S ferredoxin-type domains span residues 304–334 (GTEF…GHSY) and 353–382 (YDDY…LHEL). [4Fe-4S] cluster-binding residues include Cys-313, Cys-316, Cys-319, Cys-323, Cys-366, Cys-369, and Cys-373. The tract at residues 433–477 (KEDGKITKGPGPLKQWTQIRDFPAPNKSRFRDWFEDRRKEKGEDK) is disordered. Basic and acidic residues predominate over residues 461 to 477 (RFRDWFEDRRKEKGEDK).

The protein belongs to the LutB/YkgF family.

Functionally, is involved in L-lactate degradation and allows cells to grow with lactate as the sole carbon source. Has probably a role as an electron transporter during oxidation of L-lactate. This chain is Lactate utilization protein B, found in Bacillus licheniformis (strain ATCC 14580 / DSM 13 / JCM 2505 / CCUG 7422 / NBRC 12200 / NCIMB 9375 / NCTC 10341 / NRRL NRS-1264 / Gibson 46).